Reading from the N-terminus, the 122-residue chain is MSMASSSSSSLLAMAVLAALFAGAWCVPKVTFTVEKGSNEKHLAVLVKYEGDTMAEVELREHGSDEWVAMTKGEGGVWTFDSEEPLQGPFNFRFLTEKGMKNVFDDVVPEKYTIGATYAPEE.

The N-terminal stretch at 1–26 (MSMASSSSSSLLAMAVLAALFAGAWC) is a signal peptide. Residues 41-120 (KHLAVLVKYE…KYTIGATYAP (80 aa)) enclose the Expansin-like CBD domain.

This sequence belongs to the expansin family. Expansin B subfamily. As to expression, pollen specific.

It localises to the secreted. The protein is Pollen allergen Phl p 2 (PHLPII) of Phleum pratense (Common timothy).